The chain runs to 134 residues: UPF0102 protein Dvul_2148 (134 aa).

The protein belongs to the UPF0102 family.

This Nitratidesulfovibrio vulgaris (strain DP4) (Desulfovibrio vulgaris) protein is UPF0102 protein Dvul_2148.